A 442-amino-acid polypeptide reads, in one-letter code: Trigger factor (442 aa).

In terms of domain architecture, PPIase FKBP-type spans 176–259 (GDFISLSLYV…VNAVIEISSP (84 aa)).

This sequence belongs to the FKBP-type PPIase family. Tig subfamily.

The protein resides in the cytoplasm. It carries out the reaction [protein]-peptidylproline (omega=180) = [protein]-peptidylproline (omega=0). Involved in protein export. Acts as a chaperone by maintaining the newly synthesized protein in an open conformation. Functions as a peptidyl-prolyl cis-trans isomerase. The chain is Trigger factor (tig) from Chlamydia trachomatis serovar D (strain ATCC VR-885 / DSM 19411 / UW-3/Cx).